Reading from the N-terminus, the 442-residue chain is Shufflon protein B (442 aa).

Residues 1–361 (MKKYDRGWAS…TGAILSCQSG (361 aa)) form a constant region region. Residues 362 to 442 (TWKSSSASIW…SYFMKITCLK (81 aa)) are variable region.

This is Shufflon protein B from Escherichia coli.